Reading from the N-terminus, the 212-residue chain is tRNA (guanine-N(7)-)-methyltransferase (212 aa).

S-adenosyl-L-methionine contacts are provided by Glu-44, Asp-69, Asp-96, and Asp-118. The active site involves Asp-118. Position 122 (Lys-122) interacts with substrate. Residues 124 to 129 (RHEKRR) form an interaction with RNA region. Substrate-binding positions include Asp-154 and 191–194 (TEYE).

It belongs to the class I-like SAM-binding methyltransferase superfamily. TrmB family.

It carries out the reaction guanosine(46) in tRNA + S-adenosyl-L-methionine = N(7)-methylguanosine(46) in tRNA + S-adenosyl-L-homocysteine. It participates in tRNA modification; N(7)-methylguanine-tRNA biosynthesis. In terms of biological role, catalyzes the formation of N(7)-methylguanine at position 46 (m7G46) in tRNA. The sequence is that of tRNA (guanine-N(7)-)-methyltransferase from Streptococcus sanguinis (strain SK36).